A 427-amino-acid polypeptide reads, in one-letter code: Glucose-1-phosphate adenylyltransferase (427 aa).

Alpha-D-glucose 1-phosphate-binding positions include Y112, G177, 192–193 (EK), and S210.

The protein belongs to the bacterial/plant glucose-1-phosphate adenylyltransferase family. As to quaternary structure, homotetramer.

It carries out the reaction alpha-D-glucose 1-phosphate + ATP + H(+) = ADP-alpha-D-glucose + diphosphate. It functions in the pathway glycan biosynthesis; glycogen biosynthesis. In terms of biological role, involved in the biosynthesis of ADP-glucose, a building block required for the elongation reactions to produce glycogen. Catalyzes the reaction between ATP and alpha-D-glucose 1-phosphate (G1P) to produce pyrophosphate and ADP-Glc. The chain is Glucose-1-phosphate adenylyltransferase from Methylobacillus flagellatus (strain ATCC 51484 / DSM 6875 / VKM B-1610 / KT).